The chain runs to 105 residues: Malonate decarboxylase acyl carrier protein (105 aa).

Ser-28 is subject to O-(phosphoribosyl dephospho-coenzyme A)serine.

It belongs to the MdcC family. Post-translationally, covalently binds the prosthetic group of malonate decarboxylase.

It localises to the cytoplasm. In terms of biological role, subunit of malonate decarboxylase, it is an acyl carrier protein to which acetyl and malonyl thioester residues are bound via a 2'-(5''-phosphoribosyl)-3'-dephospho-CoA prosthetic group and turn over during the catalytic mechanism. The polypeptide is Malonate decarboxylase acyl carrier protein (Xanthomonas axonopodis pv. citri (strain 306)).